Consider the following 356-residue polypeptide: Phosphate acyltransferase (356 aa).

This sequence belongs to the PlsX family. Homodimer. Probably interacts with PlsY.

It localises to the cytoplasm. The enzyme catalyses a fatty acyl-[ACP] + phosphate = an acyl phosphate + holo-[ACP]. Its pathway is lipid metabolism; phospholipid metabolism. Its function is as follows. Catalyzes the reversible formation of acyl-phosphate (acyl-PO(4)) from acyl-[acyl-carrier-protein] (acyl-ACP). This enzyme utilizes acyl-ACP as fatty acyl donor, but not acyl-CoA. The sequence is that of Phosphate acyltransferase from Shigella sonnei (strain Ss046).